A 455-amino-acid chain; its full sequence is uncharacterized protein (455 aa).

The first 24 residues, 1 to 24, serve as a signal peptide directing secretion; it reads MKTTKILLHTGVLALSLLATQVMA.

This is an uncharacterized protein from Pseudomonas aeruginosa (strain ATCC 15692 / DSM 22644 / CIP 104116 / JCM 14847 / LMG 12228 / 1C / PRS 101 / PAO1).